A 271-amino-acid polypeptide reads, in one-letter code: Regulatory protein RecX (271 aa).

This sequence belongs to the RecX family.

The protein resides in the cytoplasm. Its function is as follows. Modulates RecA activity. This is Regulatory protein RecX from Geobacillus sp. (strain WCH70).